We begin with the raw amino-acid sequence, 138 residues long: Acidic phospholipase A2 Cvv-E6h (138 aa).

Positions 1-16 are cleaved as a signal peptide; that stretch reads MRTLWIVAVLLLGVEG. Cystine bridges form between Cys42-Cys131, Cys44-Cys60, Cys59-Cys111, Cys65-Cys138, Cys66-Cys104, Cys73-Cys97, and Cys91-Cys102. Tyr43, Gly45, and Gly47 together coordinate Ca(2+). Residue His63 is part of the active site. Asp64 lines the Ca(2+) pocket. Asp105 is a catalytic residue.

This sequence belongs to the phospholipase A2 family. Group II subfamily. D49 sub-subfamily. Ca(2+) serves as cofactor. As to expression, expressed by the venom gland.

The protein resides in the secreted. It carries out the reaction a 1,2-diacyl-sn-glycero-3-phosphocholine + H2O = a 1-acyl-sn-glycero-3-phosphocholine + a fatty acid + H(+). In terms of biological role, snake venom phospholipase A2 (PLA2) that shows very low inhibition of ADP-induced platelet aggregation in platelet-rich plasma of human, rabbit and guinea pig. In vivo, shows efficient edema-inducing activities in rat paws. PLA2 catalyzes the calcium-dependent hydrolysis of the 2-acyl groups in 3-sn-phosphoglycerides. This Crotalus viridis viridis (Prairie rattlesnake) protein is Acidic phospholipase A2 Cvv-E6h.